A 215-amino-acid chain; its full sequence is NADH-quinone oxidoreductase subunit C (215 aa).

Belongs to the complex I 30 kDa subunit family. As to quaternary structure, NDH-1 is composed of 14 different subunits. Subunits NuoB, C, D, E, F, and G constitute the peripheral sector of the complex.

The protein resides in the cell inner membrane. The enzyme catalyses a quinone + NADH + 5 H(+)(in) = a quinol + NAD(+) + 4 H(+)(out). NDH-1 shuttles electrons from NADH, via FMN and iron-sulfur (Fe-S) centers, to quinones in the respiratory chain. The immediate electron acceptor for the enzyme in this species is believed to be ubiquinone. Couples the redox reaction to proton translocation (for every two electrons transferred, four hydrogen ions are translocated across the cytoplasmic membrane), and thus conserves the redox energy in a proton gradient. This is NADH-quinone oxidoreductase subunit C from Methylobacterium sp. (strain 4-46).